The chain runs to 325 residues: Glutarate 2-hydroxylase (325 aa).

Residues H160, D162, and H292 each coordinate Fe cation.

Belongs to the glutarate hydroxylase family. As to quaternary structure, homotetramer. Fe(2+) is required as a cofactor.

The enzyme catalyses glutarate + 2-oxoglutarate + O2 = (S)-2-hydroxyglutarate + succinate + CO2. It functions in the pathway amino-acid degradation. Functionally, acts as an alpha-ketoglutarate-dependent dioxygenase catalyzing hydroxylation of glutarate (GA) to L-2-hydroxyglutarate (L2HG). Functions in a L-lysine degradation pathway that proceeds via cadaverine, glutarate and L-2-hydroxyglutarate. The sequence is that of Glutarate 2-hydroxylase from Escherichia coli O157:H7.